Consider the following 371-residue polypeptide: DNA replication and repair protein RecF (371 aa).

30-37 contributes to the ATP binding site; that stretch reads GANAQGKT.

The protein belongs to the RecF family.

The protein resides in the cytoplasm. Functionally, the RecF protein is involved in DNA metabolism; it is required for DNA replication and normal SOS inducibility. RecF binds preferentially to single-stranded, linear DNA. It also seems to bind ATP. This Lacticaseibacillus paracasei (strain ATCC 334 / BCRC 17002 / CCUG 31169 / CIP 107868 / KCTC 3260 / NRRL B-441) (Lactobacillus paracasei) protein is DNA replication and repair protein RecF.